Consider the following 202-residue polypeptide: MEHLVNIFVKSIFIENLALAFFLGMCTYLAVSKKVQTSMGLGVAVIVVMTITVPVNNLLYNYFLREGALAWAGFGDTDLTFVGLISYIGVIAAIVQILEMTLDKYVPSLYNALGIFLPLITVNCAILGASLFMVERDYNFVESVTFGFGSGVGWALAIVLLAGIREKMKYSDVPEGLDGLGITFIVVGLMSFGFLSFSGIQM.

6 helical membrane-spanning segments follow: residues Ser-11–Val-31, Met-39–Leu-59, Leu-79–Glu-99, Gly-114–Val-134, Val-144–Ile-164, and Leu-180–Ile-200.

Belongs to the NqrDE/RnfAE family. As to quaternary structure, composed of six subunits; NqrA, NqrB, NqrC, NqrD, NqrE and NqrF.

The protein localises to the cell inner membrane. It carries out the reaction a ubiquinone + n Na(+)(in) + NADH + H(+) = a ubiquinol + n Na(+)(out) + NAD(+). In terms of biological role, NQR complex catalyzes the reduction of ubiquinone-1 to ubiquinol by two successive reactions, coupled with the transport of Na(+) ions from the cytoplasm to the periplasm. NqrA to NqrE are probably involved in the second step, the conversion of ubisemiquinone to ubiquinol. The chain is Na(+)-translocating NADH-quinone reductase subunit E from Maridesulfovibrio salexigens (strain ATCC 14822 / DSM 2638 / NCIMB 8403 / VKM B-1763) (Desulfovibrio salexigens).